The chain runs to 114 residues: Iron-sulfur cluster insertion protein ErpA (114 aa).

Iron-sulfur cluster-binding residues include Cys-42, Cys-106, and Cys-108.

The protein belongs to the HesB/IscA family. Homodimer. Iron-sulfur cluster serves as cofactor.

Its function is as follows. Required for insertion of 4Fe-4S clusters for at least IspG. The polypeptide is Iron-sulfur cluster insertion protein ErpA (Salmonella typhi).